The sequence spans 296 residues: Cholesterol ring-cleaving hydrolase IpdA subunit (296 aa).

The protein belongs to the 3-oxoacid CoA-transferase subunit A family. Heterotetramer composed of 2 IpdA subunits and 2 IpdB subunits.

It catalyses the reaction (3E)-2-(2-carboxylatoethyl)-3-methyl-6-oxocyclohex-1-ene-1-carboxyl-CoA + H2O = 6-methyl-3,7-dioxodecanedioyl-CoA. It participates in steroid metabolism; cholesterol degradation. Involved in the final steps of cholesterol and steroid degradation. Opens the last steroid ring of cholesterol by catalyzing the hydrolysis of (3E)-2-(2-carboxylatoethyl)-3-methyl-6-oxocyclohex-1-ene-1-carboxyl-CoA (COCHEA-CoA) to 6-methyl-3,7-dioxodecanedioyl-CoA (MeDODA-CoA). The sequence is that of Cholesterol ring-cleaving hydrolase IpdA subunit from Rhodococcus jostii (strain RHA1).